We begin with the raw amino-acid sequence, 358 residues long: Magnesium-protoporphyrin IX monomethyl ester [oxidative] cyclase 3 (358 aa).

It belongs to the AcsF family. Fe cation serves as cofactor.

It catalyses the reaction Mg-protoporphyrin IX 13-monomethyl ester + 3 NADPH + 3 O2 + 2 H(+) = 3,8-divinyl protochlorophyllide a + 3 NADP(+) + 5 H2O. It functions in the pathway porphyrin-containing compound metabolism; chlorophyll biosynthesis (light-independent). Catalyzes the formation of the isocyclic ring in chlorophyll biosynthesis. Mediates the cyclase reaction, which results in the formation of divinylprotochlorophyllide (Pchlide) characteristic of all chlorophylls from magnesium-protoporphyrin IX 13-monomethyl ester (MgPMME). The sequence is that of Magnesium-protoporphyrin IX monomethyl ester [oxidative] cyclase 3 from Nostoc sp. (strain PCC 7120 / SAG 25.82 / UTEX 2576).